Here is a 260-residue protein sequence, read N- to C-terminus: Phosphatidate cytidylyltransferase (260 aa).

A run of 7 helical transmembrane segments spans residues 9-29, 46-66, 70-90, 102-122, 130-150, 172-192, and 196-216; these read IIALIVFLPILLKGGLVLMIF, MIKFVSVPGLISAVGLIIIML, AGPWVQVIQLKSLIAMSFIVL, FMDAAFCLMSVAYVGIGFMFF, LHYILYAFLIVWLTDTGAYLF, FIGGLFCSLIVPLAMLYFVDF, and VWILLGVTLILSLFGQLGDLV.

The protein belongs to the CDS family.

Its subcellular location is the cell membrane. It catalyses the reaction a 1,2-diacyl-sn-glycero-3-phosphate + CTP + H(+) = a CDP-1,2-diacyl-sn-glycerol + diphosphate. The protein operates within phospholipid metabolism; CDP-diacylglycerol biosynthesis; CDP-diacylglycerol from sn-glycerol 3-phosphate: step 3/3. This chain is Phosphatidate cytidylyltransferase (cdsA), found in Staphylococcus aureus (strain COL).